The following is a 165-amino-acid chain: Cell division protein SepF (165 aa).

The interval 23-75 (DEYGDYAGDYETQETAPVATRSSKRESRPAPVSDLSERRRPASGPTGVVAELS) is disordered.

The protein belongs to the SepF family. Homodimer. Interacts with FtsZ.

It localises to the cytoplasm. Cell division protein that is part of the divisome complex and is recruited early to the Z-ring. Probably stimulates Z-ring formation, perhaps through the cross-linking of FtsZ protofilaments. Its function overlaps with FtsA. The chain is Cell division protein SepF from Nocardioides sp. (strain ATCC BAA-499 / JS614).